A 225-amino-acid polypeptide reads, in one-letter code: Ribonuclease 3 (225 aa).

The RNase III domain maps to 5–127; sequence IDKLERKLGY…IIGAIYLDSD (123 aa). Glu-40 contributes to the Mg(2+) binding site. Asp-44 is an active-site residue. Residues Asp-113 and Glu-116 each contribute to the Mg(2+) site. Glu-116 is an active-site residue. The DRBM domain maps to 154–224; the sequence is DPKTRLQEFL…AETALEQLTN (71 aa). The disordered stretch occupies residues 204 to 225; sequence GTSRRKAEQAAAETALEQLTNG. Over residues 212–225 the composition is skewed to low complexity; it reads QAAAETALEQLTNG.

It belongs to the ribonuclease III family. As to quaternary structure, homodimer. Mg(2+) is required as a cofactor.

The protein localises to the cytoplasm. The enzyme catalyses Endonucleolytic cleavage to 5'-phosphomonoester.. Functionally, digests double-stranded RNA. Involved in the processing of primary rRNA transcript to yield the immediate precursors to the large and small rRNAs (23S and 16S). Processes some mRNAs, and tRNAs when they are encoded in the rRNA operon. Processes pre-crRNA and tracrRNA of type II CRISPR loci if present in the organism. In Vibrio parahaemolyticus serotype O3:K6 (strain RIMD 2210633), this protein is Ribonuclease 3.